The sequence spans 191 residues: Threonylcarbamoyl-AMP synthase (191 aa).

The YrdC-like domain occupies 10 to 191 (VPKLTQCVRT…DLYTDAIIRA (182 aa)).

It belongs to the SUA5 family. TsaC subfamily.

Its subcellular location is the cytoplasm. It carries out the reaction L-threonine + hydrogencarbonate + ATP = L-threonylcarbamoyladenylate + diphosphate + H2O. Required for the formation of a threonylcarbamoyl group on adenosine at position 37 (t(6)A37) in tRNAs that read codons beginning with adenine. Catalyzes the conversion of L-threonine, HCO(3)(-)/CO(2) and ATP to give threonylcarbamoyl-AMP (TC-AMP) as the acyladenylate intermediate, with the release of diphosphate. This is Threonylcarbamoyl-AMP synthase from Saccharophagus degradans (strain 2-40 / ATCC 43961 / DSM 17024).